A 156-amino-acid chain; its full sequence is Nascent polypeptide-associated complex subunit beta (156 aa).

Disordered regions lie at residues 1–42 and 129–156; these read MPID…KDDT and QANE…AEVE. The 66-residue stretch at 38–103 folds into the NAC-A/B domain; sequence NKDDTKLHNQ…AQEKNLQELF (66 aa).

The protein belongs to the NAC-beta family. Part of the nascent polypeptide-associated complex (NAC), consisting of EGD2 and EGD1. NAC associates with ribosomes via EGD1.

Its subcellular location is the cytoplasm. The protein localises to the nucleus. Component of the nascent polypeptide-associated complex (NAC), a dynamic component of the ribosomal exit tunnel, protecting the emerging polypeptides from interaction with other cytoplasmic proteins to ensure appropriate nascent protein targeting. The NAC complex also promotes mitochondrial protein import by enhancing productive ribosome interactions with the outer mitochondrial membrane and blocks the inappropriate interaction of ribosomes translating non-secretory nascent polypeptides with translocation sites in the membrane of the endoplasmic reticulum. EGD1 may act as a transcription factor that exert a negative effect on the expression of several genes that are transcribed by RNA polymerase II. The protein is Nascent polypeptide-associated complex subunit beta (EGD1) of Candida glabrata (strain ATCC 2001 / BCRC 20586 / JCM 3761 / NBRC 0622 / NRRL Y-65 / CBS 138) (Yeast).